A 303-amino-acid chain; its full sequence is Aspartate carbamoyltransferase catalytic subunit (303 aa).

Carbamoyl phosphate contacts are provided by arginine 51 and threonine 52. Residue lysine 80 coordinates L-aspartate. Carbamoyl phosphate contacts are provided by arginine 101, histidine 129, and glutamine 132. L-aspartate contacts are provided by arginine 162 and arginine 221. Positions 260 and 261 each coordinate carbamoyl phosphate.

This sequence belongs to the aspartate/ornithine carbamoyltransferase superfamily. ATCase family. Heterooligomer of catalytic and regulatory chains.

The enzyme catalyses carbamoyl phosphate + L-aspartate = N-carbamoyl-L-aspartate + phosphate + H(+). Its pathway is pyrimidine metabolism; UMP biosynthesis via de novo pathway; (S)-dihydroorotate from bicarbonate: step 2/3. Functionally, catalyzes the condensation of carbamoyl phosphate and aspartate to form carbamoyl aspartate and inorganic phosphate, the committed step in the de novo pyrimidine nucleotide biosynthesis pathway. The protein is Aspartate carbamoyltransferase catalytic subunit of Saccharolobus islandicus (strain Y.N.15.51 / Yellowstone #2) (Sulfolobus islandicus).